The following is a 437-amino-acid chain: MSGIPHDHYEPKTGIEKWLHDRLPIVGLVYDTIMIPTPKNLNWWWIWGIVLAFTLVLQIVTGIVLAMHYTPHVDLAFASVEHIMRDVNGGWAMRYIHANGASLFFLAVYIHIFRGLYYGSYKAPREITWIVGMVIYLLMMGTAFMGYVLPWGQMSFWGATVITGLFGAIPGIGPSIQAWLLGGPAVDNATLNRFFSLHYLLPFVIAALVAIHIWAFHTTGNNNPTGVEVRRTSKADAEKDTLPFWPYFVIKDLFALALVLLGFFAVVAYMPNYLGHPDNYVQANPLSTPAHIVPEWYFLPFYAILRAFAADVWVVILVDGLTFGIVDAKFFGVIAMFGAIAVMALAPWLDTSKVRSGAYRPKFRMWFWFLVLDFVVLTWVGAMPTEYPYDWISLIASTYWFAYFLVILPLLGATEKPEPIPASIEEDFNSHYGNPAE.

Residues 45–65 (WIWGIVLAFTLVLQIVTGIVL) form a helical membrane-spanning segment. Residues H97 and H111 each coordinate heme b. A run of 9 helical transmembrane segments spans residues 100–120 (GASLFFLAVYIHIFRGLYYGS), 129–149 (WIVGMVIYLLMMGTAFMGYVL), 156–176 (FWGATVITGLFGAIPGIGPSI), 194–214 (FFSLHYLLPFVIAALVAIHIW), 248–268 (FVIKDLFALALVLLGFFAVVA), 298–318 (FLPFYAILRAFAADVWVVILV), 330–350 (FFGVIAMFGAIAVMALAPWLD), 365–385 (MWFWFLVLDFVVLTWVGAMPT), and 391–411 (WISLIASTYWFAYFLVILPLL). The heme b site is built by H198 and H212.

This sequence belongs to the cytochrome b family. The main subunits of complex b-c1 are: cytochrome b, cytochrome c1 and the Rieske protein. It depends on heme b as a cofactor.

The protein resides in the cell membrane. Its function is as follows. Component of the ubiquinol-cytochrome c reductase complex (complex III or cytochrome b-c1 complex), which is a respiratory chain that generates an electrochemical potential coupled to ATP synthesis. This chain is Cytochrome b (petB), found in Rhodobacter capsulatus (strain ATCC BAA-309 / NBRC 16581 / SB1003).